We begin with the raw amino-acid sequence, 418 residues long: Nucleoside permease NupG (418 aa).

Residues methionine 1–lysine 4 are Cytoplasmic-facing. A helical membrane pass occupies residues leucine 5–methionine 29. At phenylalanine 30–aspartate 36 the chain is on the periplasmic side. The helical transmembrane segment at glycine 37 to leucine 58 threads the bilayer. The Cytoplasmic portion of the chain corresponds to glycine 59–serine 67. The helical transmembrane segment at alanine 68 to glutamine 88 threads the bilayer. Topologically, residues valine 89–threonine 91 are periplasmic. A helical membrane pass occupies residues proline 92–isoleucine 113. The Cytoplasmic portion of the chain corresponds to asparagine 114–isoleucine 135. A helical membrane pass occupies residues arginine 136–glutamate 156. The Periplasmic portion of the chain corresponds to leucine 157–serine 158. A helical transmembrane segment spans residues histidine 159–threonine 178. Residues leucine 179–arginine 209 are Cytoplasmic-facing. Residues methionine 210 to histidine 236 traverse the membrane as a helical segment. The Periplasmic portion of the chain corresponds to serine 237–serine 247. A helical transmembrane segment spans residues phenylalanine 248 to isoleucine 268. At leucine 269–isoleucine 280 the chain is on the cytoplasmic side. A helical membrane pass occupies residues lysine 281–tyrosine 300. Topologically, residues glycine 301–proline 305 are periplasmic. Residues phenylalanine 306–asparagine 326 traverse the membrane as a helical segment. At isoleucine 327–glutamine 346 the chain is on the cytoplasmic side. Residues glycine 347–valine 369 traverse the membrane as a helical segment. Topologically, residues glutamate 370–aspartate 379 are periplasmic. The helical transmembrane segment at tryptophan 380 to lysine 403 threads the bilayer. Topologically, residues tyrosine 404–histidine 418 are cytoplasmic.

It belongs to the major facilitator superfamily. Nucleoside:H(+) symporter (NHS) (TC 2.A.1.10) family.

Its subcellular location is the cell inner membrane. It catalyses the reaction adenosine(in) + H(+)(in) = adenosine(out) + H(+)(out). The enzyme catalyses uridine(in) + H(+)(in) = uridine(out) + H(+)(out). The catalysed reaction is thymidine(in) + H(+)(in) = thymidine(out) + H(+)(out). It carries out the reaction cytidine(in) + H(+)(in) = cytidine(out) + H(+)(out). It catalyses the reaction 2'-deoxycytidine(in) + H(+)(in) = 2'-deoxycytidine(out) + H(+)(out). The enzyme catalyses guanosine(in) + H(+)(in) = guanosine(out) + H(+)(out). The catalysed reaction is inosine(in) + H(+)(in) = inosine(out) + H(+)(out). Its activity is regulated as follows. Inhibited by the protonophore uncouplers 2,4-dinitrophenol and carbonyl cyanide m-chlorophenylhydrazone (CCCP), and by valinomycin. Inhibited by the nucleoside antibiotic showdomycin. In terms of biological role, broad-specificity transporter of purine and pyrimidine nucleosides. Can transport adenosine, uridine, thymidine, cytidine, deoxycytidine, guanosine and inosine. Can also transport xanthosine, but with a very low affinity. Transport is driven by a proton motive force. In Escherichia coli (strain K12), this protein is Nucleoside permease NupG.